We begin with the raw amino-acid sequence, 119 residues long: Large ribosomal subunit protein bL20 (119 aa).

The protein belongs to the bacterial ribosomal protein bL20 family.

Its function is as follows. Binds directly to 23S ribosomal RNA and is necessary for the in vitro assembly process of the 50S ribosomal subunit. It is not involved in the protein synthesizing functions of that subunit. The polypeptide is Large ribosomal subunit protein bL20 (Bradyrhizobium diazoefficiens (strain JCM 10833 / BCRC 13528 / IAM 13628 / NBRC 14792 / USDA 110)).